The primary structure comprises 324 residues: MLSVNLKSLPIVENMIEKAEEMNIEVIKLENGATVLDCGVNVMGSIEAGKAFTKICLGGLAHVGVSIAGTVSDEMVLPCVKVKTSHPAIATLGSQKAGWTINIGKFFAMGSGPARALAKIPKATYEEINYEDNADVAILCLEASQLPNEEVAEFVAEKCGVDVSKVYLLVAPTSSLVGSIQISGRVVENGTYKMLEALHFDVNKVKFAAGIAPVAPIIGDDLAMMGATNDMVLYGGRTYYYIESDENDDVEALCKALPSCSSQDYGKPFLETFKAANYDFYKIDKGMFAPAVVVINDMRTGKLVTYGKPHVDVLKKSLGYKELE.

The protein belongs to the MCH family.

The protein localises to the cytoplasm. It catalyses the reaction 5,10-methenyl-5,6,7,8-tetrahydromethanopterin + H2O = N(5)-formyl-5,6,7,8-tetrahydromethanopterin + H(+). The protein operates within one-carbon metabolism; methanogenesis from CO(2); 5,10-methenyl-5,6,7,8-tetrahydromethanopterin from CO(2): step 3/3. Catalyzes the reversible interconversion of 5-formyl-H(4)MPT to methenyl-H(4)MPT(+). The sequence is that of Methenyltetrahydromethanopterin cyclohydrolase from Methanococcus aeolicus (strain ATCC BAA-1280 / DSM 17508 / OCM 812 / Nankai-3).